The chain runs to 448 residues: Glucose-6-phosphate isomerase (448 aa).

Catalysis depends on Glu290, which acts as the Proton donor. Catalysis depends on residues His311 and Lys425.

It belongs to the GPI family.

The protein resides in the cytoplasm. The enzyme catalyses alpha-D-glucose 6-phosphate = beta-D-fructose 6-phosphate. The protein operates within carbohydrate biosynthesis; gluconeogenesis. It functions in the pathway carbohydrate degradation; glycolysis; D-glyceraldehyde 3-phosphate and glycerone phosphate from D-glucose: step 2/4. Catalyzes the reversible isomerization of glucose-6-phosphate to fructose-6-phosphate. This chain is Glucose-6-phosphate isomerase, found in Latilactobacillus sakei subsp. sakei (strain 23K) (Lactobacillus sakei subsp. sakei).